The primary structure comprises 523 residues: Translation initiation factor eIF2B subunit delta (523 aa).

A disordered region spans residues 1–154 (MAAVAVAVRE…EHTQADDPTL (154 aa)). The residue at position 2 (Ala2) is an N-acetylalanine. Phosphoserine is present on Ser12. Residues 31–40 (MTQEEKLQLR) show a composition bias toward basic and acidic residues. The span at 41–51 (KEKKQQKKKRK) shows a compositional bias: basic residues. A Phosphothreonine modification is found at Thr85. The span at 95 to 120 (TKAELRAERRAKQEAERALKQARKGE) shows a compositional bias: basic and acidic residues. Residue Ser129 is modified to Phosphoserine. The may bind the chemical integrated stress response (ISR) inhibitor ISRIB stretch occupies residues 170–179 (RKDYGSKVSL).

It belongs to the eIF-2B alpha/beta/delta subunits family. Component of the translation initiation factor 2B (eIF2B) complex which is a heterodecamer of two sets of five different subunits: alpha, beta, gamma, delta and epsilon. Subunits alpha, beta and delta comprise a regulatory subcomplex and subunits epsilon and gamma comprise a catalytic subcomplex. Within the complex, the hexameric regulatory complex resides at the center, with the two heterodimeric catalytic subcomplexes bound on opposite sides.

It localises to the cytoplasm. The protein localises to the cytosol. Activated by the chemical integrated stress response (ISR) inhibitor ISRIB which stimulates guanine nucleotide exchange factor activity for both phosphorylated and unphosphorylated eIF2. In terms of biological role, acts as a component of the translation initiation factor 2B (eIF2B) complex, which catalyzes the exchange of GDP for GTP on eukaryotic initiation factor 2 (eIF2) gamma subunit. Its guanine nucleotide exchange factor activity is repressed when bound to eIF2 complex phosphorylated on the alpha subunit, thereby limiting the amount of methionyl-initiator methionine tRNA available to the ribosome and consequently global translation is repressed. The protein is Translation initiation factor eIF2B subunit delta (EIF2B4) of Oryctolagus cuniculus (Rabbit).